Consider the following 249-residue polypeptide: ATP synthase subunit a (249 aa).

The next 5 helical transmembrane spans lie at 33–53 (GQVI…SIAA), 92–112 (LPFI…GALI), 131–151 (INTT…AGIS), 196–216 (LVVA…LMAL), and 217–237 (GLFT…AYIH).

It belongs to the ATPase A chain family. In terms of assembly, F-type ATPases have 2 components, CF(1) - the catalytic core - and CF(0) - the membrane proton channel. CF(1) has five subunits: alpha(3), beta(3), gamma(1), delta(1), epsilon(1). CF(0) has four main subunits: a, b, b' and c.

Its subcellular location is the cellular thylakoid membrane. Key component of the proton channel; it plays a direct role in the translocation of protons across the membrane. This chain is ATP synthase subunit a, found in Microcystis aeruginosa (strain NIES-843 / IAM M-2473).